We begin with the raw amino-acid sequence, 78 residues long: Cytochrome c oxidase subunit 6b-2 (78 aa).

A CHCH domain is found at 22 to 65 (TRHCFTRYIEFHRCTTAKGEESNDCERFAKYYRALCPGEWVDKW). Residues 25–35 (CFTRYIEFHRC) carry the Cx9C motif motif. 2 disulfides stabilise this stretch: Cys-25/Cys-57 and Cys-35/Cys-46. The Cx10C motif motif lies at 46 to 57 (CERFAKYYRALC).

The protein belongs to the cytochrome c oxidase subunit 6B (TC 3.D.4.8) family. In terms of tissue distribution, specifically expressed in roots.

It is found in the mitochondrion. This protein is one of the nuclear-coded polypeptide chains of cytochrome c oxidase, the terminal oxidase in mitochondrial electron transport. This protein may be one of the heme-binding subunits of the oxidase. The protein is Cytochrome c oxidase subunit 6b-2 (COX6B-2) of Arabidopsis thaliana (Mouse-ear cress).